We begin with the raw amino-acid sequence, 160 residues long: Prostaglandin E synthase 3 (160 aa).

Residues 1–90 (MQPASAKWYD…ESGQSWPRLT (90 aa)) form the CS domain. The residue at position 33 (Lys33) is an N6-acetyllysine. Residue Lys35 forms a Glycyl lysine isopeptide (Lys-Gly) (interchain with G-Cter in SUMO2) linkage. Ser44 is modified (phosphoserine). Lys65 participates in a covalent cross-link: Glycyl lysine isopeptide (Lys-Gly) (interchain with G-Cter in SUMO2). 4 positions are modified to phosphoserine: Ser85, Ser100, Ser113, and Ser118. The tract at residues 118-160 (SNFDRFSEMMDHMGGDEDVDLPEVDGADDDSQDSDDEKMPDLE) is disordered. The span at 122–132 (RFSEMMDHMGG) shows a compositional bias: basic and acidic residues. Positions 133-153 (DEDVDLPEVDGADDDSQDSDD) are enriched in acidic residues. A phosphoserine mark is found at Ser148 and Ser151. The short motif at 157-160 (PDLE) is the PXLE motif element.

This sequence belongs to the p23/wos2 family. Probably forms a complex composed of chaperones HSP90 and HSP70, co-chaperones STIP1/HOP, CDC37, PPP5C, PTGES3/p23, TSC1 and client protein TSC2. Binds to the progesterone receptor. Interacts with TERT; the interaction, together with HSP90AA1, is required for correct assembly and stabilization of the telomerase holoenzyme complex. Interacts (via PXLE motif) with EGLN1/PHD2, recruiting EGLN1/PHD2 to the HSP90 pathway to facilitate HIF alpha proteins hydroxylation. Interacts with HSP90AA1, FLCN, FNIP1 and FNIP2. Post-translationally, proteolytically cleaved by caspase-7 (CASP7) in response to apoptosis, leading to its inactivation. Expressed in testis, kidney, bladder and ovary.

The protein resides in the cytoplasm. It carries out the reaction prostaglandin H2 = prostaglandin E2. Its pathway is lipid metabolism; prostaglandin biosynthesis. Cytosolic prostaglandin synthase that catalyzes the oxidoreduction of prostaglandin endoperoxide H2 (PGH2) to prostaglandin E2 (PGE2). Molecular chaperone that localizes to genomic response elements in a hormone-dependent manner and disrupts receptor-mediated transcriptional activation, by promoting disassembly of transcriptional regulatory complexes. Facilitates HIF alpha proteins hydroxylation via interaction with EGLN1/PHD2, leading to recruit EGLN1/PHD2 to the HSP90 pathway. The polypeptide is Prostaglandin E synthase 3 (Ptges3) (Mus musculus (Mouse)).